The sequence spans 440 residues: Argininosuccinate lyase (440 aa).

The protein belongs to the lyase 1 family. Argininosuccinate lyase subfamily.

It localises to the cytoplasm. The catalysed reaction is 2-(N(omega)-L-arginino)succinate = fumarate + L-arginine. It participates in amino-acid biosynthesis; L-arginine biosynthesis; L-arginine from L-ornithine and carbamoyl phosphate: step 3/3. The chain is Argininosuccinate lyase from Clostridium botulinum (strain 657 / Type Ba4).